A 2596-amino-acid polypeptide reads, in one-letter code: Cadherin EGF LAG seven-pass G-type receptor fmi-1 (2596 aa).

Residues 1 to 22 form the signal peptide; the sequence is MMLDRIMFLLFFILSLVIGSFS. Residues 23-2229 are Extracellular-facing; the sequence is EYLDDKYYST…IVRVAQMDNM (2207 aa). 8 consecutive Cadherin domains span residues 166-270, 271-375, 376-479, 480-581, 582-682, 683-784, 785-892, and 893-1000; these read QQEK…SPIF, EKDS…APVF, ASDS…APTL, IAAQ…APTF, DKKE…APYF, NDHP…SPQF, TSSS…APTF, and EQLS…KPAL. N-linked (GlcNAc...) asparagine glycans are attached at residues Asn-381, Asn-387, Asn-562, Asn-587, Asn-765, and Asn-824. Asn-1030 and Asn-1263 each carry an N-linked (GlcNAc...) asparagine glycan. The 37-residue stretch at 1251 to 1287 folds into the EGF-like 1 domain; that stretch reads RIDECYRGRCSNNSTCVAFENTYQCECKPGWIGRHCE. Disulfide bonds link Cys-1255/Cys-1266, Cys-1260/Cys-1275, Cys-1277/Cys-1286, Cys-1497/Cys-1526, Cys-1533/Cys-1546, Cys-1540/Cys-1555, Cys-1557/Cys-1567, Cys-1709/Cys-1732, Cys-1738/Cys-1750, Cys-1744/Cys-1759, Cys-1761/Cys-1770, and Cys-1780/Cys-1785. One can recognise a Laminin G-like 1 domain in the interval 1333–1526; that stretch reads SVSFDGEGLL…HKVGQVHEGC (194 aa). The EGF-like 2 domain occupies 1529–1568; sequence RKDFCSTSDGQCSATSKCVNRWGGRICSCPQSVHSTGECV. Positions 1577–1732 constitute a Laminin G-like 2 domain; it reads RGHSLFEEES…KKKGKTRAGC (156 aa). 2 EGF-like domains span residues 1734–1771 and 1776–1808; these read VPNRCSVDSICPAESTCHRAWNKHKCKCHKSFVGDTCL and VANVCSSGTCVSSNTTAGYECICPAGKTGKNCQ. An N-linked (GlcNAc...) asparagine glycan is attached at Asn-1789. A disulfide bond links Cys-1798 and Cys-1807. 5 N-linked (GlcNAc...) asparagine glycosylation sites follow: Asn-1965, Asn-1992, Asn-2152, Asn-2195, and Asn-2228. The GAIN-B domain maps to 2054–2219; the sequence is EYSTLISKLW…TMFVNDQSSS (166 aa). Cys-2174 and Cys-2201 are disulfide-bonded. The tract at residues 2174–2219 is GPS; it reads CVRFDEKSGTWTARGAALIGLNLTHAACEYNRIGVFTMFVNDQSSS. The chain crosses the membrane as a helical span at residues 2230 to 2250; sequence TSPAIAGVALFLCFLSILLTL. At 2251–2261 the chain is on the cytoplasmic side; it reads SRRSLKTHSVR. A helical membrane pass occupies residues 2262–2282; sequence IGFILFFAINILNLFFVHKTA. The Extracellular segment spans residues 2283 to 2292; that stretch reads INQAYCPVRN. The helical transmembrane segment at 2293–2313 threads the bilayer; that stretch reads AMLSFTSSAPFAWLFLYGLYI. The Cytoplasmic portion of the chain corresponds to 2314–2326; that stretch reads YRMLADGSSSPSL. A helical membrane pass occupies residues 2327-2347; that stretch reads TTSLLVGIVFPCLISFTTFFV. The Extracellular portion of the chain corresponds to 2348-2356; it reads TDQCSLSPH. The helical transmembrane segment at 2357 to 2377 threads the bilayer; it reads LWLFWCIILPIGLFLLLSFYA. The Cytoplasmic portion of the chain corresponds to 2378-2401; the sequence is AATSVLVSLHKKYDVFVAKYNVKR. A helical membrane pass occupies residues 2402–2422; the sequence is AVFQHFILTIFTLGMTLTGLF. Over 2423–2437 the chain is Extracellular; sequence ANQLPLPMEIMEISQ. The helical transmembrane segment at 2438-2458 threads the bilayer; that stretch reads SIIYLIAALVIFLWCVCDITT. The Cytoplasmic segment spans residues 2459-2596; the sequence is KASDSNPSMW…KNTTSTFNRE (138 aa).

It belongs to the G-protein coupled receptor 2 family. LN-TM7 subfamily. As to expression, expressed in a region of neuropil around the nerve ring and the ventral cord (at protein level). Expressed in the head, tail, ventral cord, nerve ring and neurons including HSN neurons. Expressed in DA, VA, and VB and weakly in the DB cholinergic neurons. Not expressed in ventral D-type GABAergic motorneurons.

The protein localises to the cell membrane. It is found in the cell projection. It localises to the axon. Its subcellular location is the dendrite. In terms of biological role, during ventral cord development, required for axon fasciculation and navigation, mediating both pioneer and follower axon extension, guidance and track formation. Acts in CEPsh glia and SubL neurons to guide follower axons into the nerve ring. Promotes motorneuron development by positively regulating the extension of the anterior neurite of ventral D-type GABAergic motorneurons along the anterior-posterior axis of the ventral nerve cord. Plays a role in synaptogenesis by regulating synaptic vesicle accumulation at GABAergic and cholinergic neuromuscular junctions. In Caenorhabditis elegans, this protein is Cadherin EGF LAG seven-pass G-type receptor fmi-1.